The chain runs to 524 residues: Portal protein (524 aa).

Residues 486–516 are a coiled coil; that stretch reads AMKDILQMTDEEIEQEAKQIEEESKEARFQD. Residues 500–516 show a composition bias toward basic and acidic residues; that stretch reads QEAKQIEEESKEARFQD. The interval 500–524 is disordered; the sequence is QEAKQIEEESKEARFQDPDQEQEDF.

This sequence belongs to the Tevenvirinae portal protein family. As to quaternary structure, homododecamer. Interacts with the large terminase subunit. Interacts with the major capsid protein. Interacts with the capsid vertex protein.

The protein localises to the virion. The protein resides in the host cell inner membrane. In terms of biological role, forms the portal vertex of the capsid. This portal plays critical roles in head assembly, genome packaging, neck/tail attachment, and genome ejection. The portal protein multimerizes as a single ring-shaped homododecamer arranged around a central channel. Binds to the terminase subunits to form the packaging machine. Attaches to the host inner membrane most likely through interaction with host yidC and forms together with chaperone gp40 an initiator complex to form the prohead. This chain is Portal protein (20), found in Enterobacteria phage T4 (Bacteriophage T4).